The primary structure comprises 310 residues: Vomeronasal type-1 receptor 53 (310 aa).

Residues 1–20 are Extracellular-facing; that stretch reads MNKANLLHTDINLKITLFSE. A helical membrane pass occupies residues 21–41; that stretch reads VSVGISANSILIFAHLCMLLG. The Cytoplasmic segment spans residues 42-50; that stretch reads ENRPKPIDL. A helical membrane pass occupies residues 51–71; that stretch reads YIAFFSLTQLMLLITMGLIAV. The Extracellular segment spans residues 72–93; the sequence is DMFMPWGRWDSTTCQSLIYLHR. A disulfide bridge connects residues Cys-85 and Cys-172. The chain crosses the membrane as a helical span at residues 94–114; that stretch reads LLRGLTLSATCLLNVLWTITL. Topologically, residues 115–134 are cytoplasmic; that stretch reads SPRSSCLTKFKHKSLQHISC. The helical transmembrane segment at 135-155 threads the bilayer; that stretch reads AFLFLCVLYMSFNSHLFISII. Topologically, residues 156 to 183 are extracellular; sequence AYPNLTLENFMYVTQSCSLIPLSYFRKS. N-linked (GlcNAc...) asparagine glycosylation occurs at Asn-159. The chain crosses the membrane as a helical span at residues 184–204; the sequence is MFSIPMAIREALLIGLMALSG. Over 205–238 the chain is Cytoplasmic; the sequence is GYMVAHLWRHKKQAQHLHRTSLSSKASPEQRATR. Residues 239–259 form a helical membrane-spanning segment; the sequence is TIMLLMSFFVVLYILDLVIFH. Residues 260 to 268 are Extracellular-facing; that stretch reads SRMKFKDGS. A helical transmembrane segment spans residues 269 to 289; it reads ILYGVQIIVSHSYATVSPFVF. The Cytoplasmic segment spans residues 290–310; it reads ICTEKRITNFLRSMCGRIVNI.

It belongs to the G-protein coupled receptor 1 family.

Its subcellular location is the cell membrane. Putative pheromone receptor implicated in the regulation of social and reproductive behavior. The sequence is that of Vomeronasal type-1 receptor 53 (Vmn1r53) from Mus musculus (Mouse).